A 121-amino-acid polypeptide reads, in one-letter code: Large ribosomal subunit protein bL19 (121 aa).

Belongs to the bacterial ribosomal protein bL19 family.

Its function is as follows. This protein is located at the 30S-50S ribosomal subunit interface and may play a role in the structure and function of the aminoacyl-tRNA binding site. The polypeptide is Large ribosomal subunit protein bL19 (Symbiobacterium thermophilum (strain DSM 24528 / JCM 14929 / IAM 14863 / T)).